The chain runs to 346 residues: Biotin synthase (346 aa).

The region spanning 38–256 (RQVQVSTLLS…IAVARIMMPT (219 aa)) is the Radical SAM core domain. Cysteine 53, cysteine 57, and cysteine 60 together coordinate [4Fe-4S] cluster. The [2Fe-2S] cluster site is built by cysteine 97, cysteine 128, cysteine 188, and arginine 260.

This sequence belongs to the radical SAM superfamily. Biotin synthase family. As to quaternary structure, homodimer. [4Fe-4S] cluster serves as cofactor. [2Fe-2S] cluster is required as a cofactor.

It carries out the reaction (4R,5S)-dethiobiotin + (sulfur carrier)-SH + 2 reduced [2Fe-2S]-[ferredoxin] + 2 S-adenosyl-L-methionine = (sulfur carrier)-H + biotin + 2 5'-deoxyadenosine + 2 L-methionine + 2 oxidized [2Fe-2S]-[ferredoxin]. Its pathway is cofactor biosynthesis; biotin biosynthesis; biotin from 7,8-diaminononanoate: step 2/2. Its function is as follows. Catalyzes the conversion of dethiobiotin (DTB) to biotin by the insertion of a sulfur atom into dethiobiotin via a radical-based mechanism. This Cronobacter sakazakii (strain ATCC BAA-894) (Enterobacter sakazakii) protein is Biotin synthase.